A 196-amino-acid polypeptide reads, in one-letter code: Nucleoside triphosphate pyrophosphatase (196 aa).

Asp73 serves as the catalytic Proton acceptor.

It belongs to the Maf family. A divalent metal cation is required as a cofactor.

Its subcellular location is the cytoplasm. It carries out the reaction a ribonucleoside 5'-triphosphate + H2O = a ribonucleoside 5'-phosphate + diphosphate + H(+). The catalysed reaction is a 2'-deoxyribonucleoside 5'-triphosphate + H2O = a 2'-deoxyribonucleoside 5'-phosphate + diphosphate + H(+). In terms of biological role, nucleoside triphosphate pyrophosphatase. May have a dual role in cell division arrest and in preventing the incorporation of modified nucleotides into cellular nucleic acids. The polypeptide is Nucleoside triphosphate pyrophosphatase (Chlamydia pneumoniae (Chlamydophila pneumoniae)).